Consider the following 304-residue polypeptide: Ribonuclease Z (304 aa).

Histidine 63, histidine 65, aspartate 67, histidine 68, histidine 143, aspartate 213, and histidine 271 together coordinate Zn(2+). Catalysis depends on aspartate 67, which acts as the Proton acceptor.

It belongs to the RNase Z family. In terms of assembly, homodimer. Zn(2+) is required as a cofactor.

The catalysed reaction is Endonucleolytic cleavage of RNA, removing extra 3' nucleotides from tRNA precursor, generating 3' termini of tRNAs. A 3'-hydroxy group is left at the tRNA terminus and a 5'-phosphoryl group is left at the trailer molecule.. Functionally, zinc phosphodiesterase, which displays some tRNA 3'-processing endonuclease activity. Probably involved in tRNA maturation, by removing a 3'-trailer from precursor tRNA. The sequence is that of Ribonuclease Z from Porphyromonas gingivalis (strain ATCC BAA-308 / W83).